A 408-amino-acid polypeptide reads, in one-letter code: Pleckstrin homology domain-containing family O member 1 (408 aa).

A disordered region spans residues 1–21 (MKKSGSGKRGPPDGNHQSAAP). The 112-residue stretch at 20–131 (APEKVGWVRK…WINALSSAIT (112 aa)) folds into the PH domain. An interaction with capping proteins (CPs) region spans residues 132 to 192 (RAKNRILDEV…MLTLDLIQEE (61 aa)). The tract at residues 135–307 (NRILDEVTVE…PAQPGQLSRI (173 aa)) is interaction with ATM, CKIP, IFP35 and NMI. The disordered stretch occupies residues 217-264 (LAGSRRRADSDRIQPSSQRASSLSRPWEKPDKGAPYTPQALKKFPSTE). Ser-226 is subject to Phosphoserine. Over residues 229-240 (IQPSSQRASSLS) the composition is skewed to polar residues. Residues Ser-270 and Ser-341 each carry the phosphoserine modification. Residues 307–408 (IQDLVARKLE…QHSQYRKSLM (102 aa)) form a negative regulator of AP-1 activity region. Disordered regions lie at residues 325 to 348 (VQGL…SESE) and 389 to 408 (TPDS…KSLM). Positions 389-401 (TPDSHLRQTSQHS) are enriched in polar residues.

Heterodimer or homodimer. Interacts with CK2 and actin capping subunits (capping protein CP-alpha and CP-beta). CKIP1 and CK2 together inhibit the activity of actin capping protein at the barbed ends of actin filaments. Interacts with ATM, IFP35, JUN, JUND, NMI and PI3K. Interacts with AKT1, AKT2 and AKT3 (each isozyme of PKB), PtdIns(3,5)P2, PtdIns(4,5)P2 and PtdIns(3,4,5)P2. Post-translationally, C-terminal fragments could be released during apoptosis via caspase-3-dependent cleavage.

It localises to the cell membrane. The protein resides in the nucleus. The protein localises to the cytoplasm. Its function is as follows. Plays a role in the regulation of the actin cytoskeleton through its interactions with actin capping protein (CP). May function to target CK2 to the plasma membrane thereby serving as an adapter to facilitate the phosphorylation of CP by protein kinase 2 (CK2). Appears to target ATM to the plasma membrane. Appears to also inhibit tumor cell growth by inhibiting AKT-mediated cell-survival. Also implicated in PI3K-regulated muscle differentiation, the regulation of AP-1 activity (plasma membrane bound AP-1 regulator that translocates to the nucleus) and the promotion of apoptosis induced by tumor necrosis factor TNF. When bound to PKB, it inhibits it probably by decreasing PKB level of phosphorylation. The chain is Pleckstrin homology domain-containing family O member 1 (Plekho1) from Mus musculus (Mouse).